The sequence spans 186 residues: ADP-ribosylation factor-like protein 8A (186 aa).

Positions 1 to 19 (MIALFNKLLDWFKALFWKE) form an intramembrane region, note=Mediates targeting to membranes. GTP-binding positions include 29–35 (QYSGKTT), 71–75 (DIGGQ), and 130–133 (NKRD).

This sequence belongs to the small GTPase superfamily. Arf family. As to quaternary structure, interacts with PLEKHM1. When GTP-bound, interacts with RUFY3 and RUFY4, but not with RUFY1, nor RUFY2. As to expression, ubiquitously expressed.

The protein localises to the late endosome membrane. It localises to the lysosome membrane. The protein resides in the cytoplasm. Its subcellular location is the cytoskeleton. It is found in the spindle. The protein localises to the cell projection. It localises to the axon. The protein resides in the synapse. Functionally, plays a role in lysosome motility. In neurons, mediates the anterograde axonal long-range transport of presynaptic lysosome-related vesicles required for presynaptic biogenesis and synaptic function. May play a role in chromosome segregation. The sequence is that of ADP-ribosylation factor-like protein 8A (ARL8A) from Homo sapiens (Human).